A 326-amino-acid chain; its full sequence is L-lactate dehydrogenase (326 aa).

Residue 39–60 (DVVTGMPEGKALDDSQATSIAD) coordinates NAD(+). 3 residues coordinate substrate: Arg99, Asn131, and Arg162. Asn131 contributes to the NAD(+) binding site. His186 functions as the Proton acceptor in the catalytic mechanism.

The protein belongs to the LDH/MDH superfamily. LDH family. Homotetramer.

The enzyme catalyses (S)-lactate + NAD(+) = pyruvate + NADH + H(+). It participates in fermentation; pyruvate fermentation to lactate; (S)-lactate from pyruvate: step 1/1. The sequence is that of L-lactate dehydrogenase from Toxoplasma gondii.